The primary structure comprises 220 residues: GILT-like protein CBG03282 (220 aa).

A signal peptide spans 1–22 (MTIIRTLFVYYSFLFILVLCSS). N-linked (GlcNAc...) asparagine glycosylation occurs at Asn-131.

It belongs to the GILT family.

It is found in the secreted. This is GILT-like protein CBG03282 from Caenorhabditis briggsae.